A 453-amino-acid chain; its full sequence is Asparagine--tRNA ligase (453 aa).

Belongs to the class-II aminoacyl-tRNA synthetase family. As to quaternary structure, homodimer.

It is found in the cytoplasm. It carries out the reaction tRNA(Asn) + L-asparagine + ATP = L-asparaginyl-tRNA(Asn) + AMP + diphosphate + H(+). This chain is Asparagine--tRNA ligase, found in Malacoplasma penetrans (strain HF-2) (Mycoplasma penetrans).